A 245-amino-acid polypeptide reads, in one-letter code: Phycocyanobilin:ferredoxin oxidoreductase (245 aa).

Belongs to the HY2 family.

The catalysed reaction is (2R,3Z)-phycocyanobilin + 4 oxidized [2Fe-2S]-[ferredoxin] = biliverdin IXalpha + 4 reduced [2Fe-2S]-[ferredoxin] + 4 H(+). Its function is as follows. Catalyzes the four-electron reduction of biliverdin IX-alpha (2-electron reduction at both the A and D rings); the reaction proceeds via an isolatable 2-electron intermediate, 181,182-dihydrobiliverdin. In Gloeothece citriformis (strain PCC 7424) (Cyanothece sp. (strain PCC 7424)), this protein is Phycocyanobilin:ferredoxin oxidoreductase.